The sequence spans 233 residues: Large ribosomal subunit protein uL1 (233 aa).

Belongs to the universal ribosomal protein uL1 family. As to quaternary structure, part of the 50S ribosomal subunit.

Functionally, binds directly to 23S rRNA. The L1 stalk is quite mobile in the ribosome, and is involved in E site tRNA release. In terms of biological role, protein L1 is also a translational repressor protein, it controls the translation of the L11 operon by binding to its mRNA. The protein is Large ribosomal subunit protein uL1 of Polynucleobacter necessarius subsp. necessarius (strain STIR1).